We begin with the raw amino-acid sequence, 366 residues long: Chorismate synthase (366 aa).

Positions 48 and 54 each coordinate NADP(+). Residues 125-127, 237-238, Gly-277, 292-296, and Arg-318 each bind FMN; these read RSS, NA, and KPTSS.

This sequence belongs to the chorismate synthase family. Homotetramer. The cofactor is FMNH2.

The catalysed reaction is 5-O-(1-carboxyvinyl)-3-phosphoshikimate = chorismate + phosphate. The protein operates within metabolic intermediate biosynthesis; chorismate biosynthesis; chorismate from D-erythrose 4-phosphate and phosphoenolpyruvate: step 7/7. Catalyzes the anti-1,4-elimination of the C-3 phosphate and the C-6 proR hydrogen from 5-enolpyruvylshikimate-3-phosphate (EPSP) to yield chorismate, which is the branch point compound that serves as the starting substrate for the three terminal pathways of aromatic amino acid biosynthesis. This reaction introduces a second double bond into the aromatic ring system. This Acidovorax sp. (strain JS42) protein is Chorismate synthase.